The chain runs to 307 residues: Shikimate kinase 2, chloroplastic (307 aa).

The N-terminal 60 residues, 1–60, are a transit peptide targeting the chloroplast; the sequence is MEARAGLAMQSRAAVGVGAGPGVGRRGRAVIRVGKRPTAASLRVGGPAGPAAAKPLAPLY. 101 to 108 serves as a coordination point for ATP; the sequence is GMMGSGKS. Position 108 (serine 108) interacts with Mg(2+). The substrate site is built by aspartate 126, arginine 151, and glycine 173. Arginine 212 provides a ligand contact to ATP. The interval 285-307 is disordered; the sequence is HSTSSGPVGDLIVDSQNRRTKAL.

The protein belongs to the shikimate kinase family. Mg(2+) serves as cofactor. In terms of tissue distribution, expressed in panicles.

It localises to the plastid. The protein resides in the chloroplast. The enzyme catalyses shikimate + ATP = 3-phosphoshikimate + ADP + H(+). Its pathway is metabolic intermediate biosynthesis; chorismate biosynthesis; chorismate from D-erythrose 4-phosphate and phosphoenolpyruvate: step 5/7. Its function is as follows. Catalyzes the specific phosphorylation of the 3-hydroxyl group of shikimic acid using ATP as a cosubstrate. This Oryza sativa subsp. japonica (Rice) protein is Shikimate kinase 2, chloroplastic (SK2).